Here is a 1408-residue protein sequence, read N- to C-terminus: Palladin (1408 aa).

The tract at residues 69-229 (SKSPISLCET…SASQSPTADQ (161 aa)) is disordered. Composition is skewed to polar residues over residues 149–169 (PNPSSKPKTAQQSKAGPQSQL) and 193–229 (RSPNGESSSPDSGYLSPKNQPSALMSASASQSPTADQ). Ser-194 carries the phosphoserine modification. 2 consecutive Ig-like C2-type domains span residues 278–367 (PRFI…AEVF) and 448–546 (PVFT…LVIT). 2 cysteine pairs are disulfide-bonded: Cys-299–Cys-351 and Cys-469–Cys-528. Positions 569-573 (FPPPP) are interaction with VASP. 2 disordered regions span residues 631 to 660 (NGKAYGNKSPPTPTALLSPTKEPPPLLAKP) and 687 to 727 (PPGV…VPSE). Residue Ser-639 is modified to Phosphoserine. A Phosphothreonine modification is found at Thr-642. At Ser-648 the chain carries Phosphoserine. The tract at residues 653-683 (PPPLLAKPKLDPLKLQQLQNQVRLEQEACAW) is interaction with LASP1. Residues 683-713 (WPPAPPGVPCNSSSSGSSAPPSPPFPPPPPA) are interaction with SORBS2, SPIN90 and SRC. The span at 691-701 (PCNSSSSGSSA) shows a compositional bias: low complexity. Ser-700, Ser-704, and Ser-744 each carry phosphoserine. A compositionally biased stretch (pro residues) spans 702-714 (PPSPPFPPPPPAF). Disordered stretches follow at residues 758-854 (NLGP…RFGP), 882-904 (KGVTPAGFPKKSSRTARIASDEE), and 960-981 (ETAANQDAGAPRASVGGPLDGQ). Over residues 765 to 779 (LPTPTSSPSSSSLPS) the composition is skewed to low complexity. Pro residues-rich tracts occupy residues 780–797 (PLSPTPRPFGRAPGPPFV), 807–818 (SPSPPPPPPPVF), and 828–840 (DVFPLPPPPPPLP). Residues 782–842 (SPTPRPFGRA…PPPPPPLPSS (61 aa)) are interaction with EPS8. Positions 807–842 (SPSPPPPPPPVFSPSAAYPVPDVFPLPPPPPPLPSS) are interaction with SORBS2, SPIN90, SRC and PFN1. The interval 830–834 (FPLPP) is interaction with VASP. Position 901 is a phosphoserine (Ser-901). 2 positions are modified to phosphoserine: Ser-1004 and Ser-1009. The region spanning 1026 to 1110 (PFFEMKLKHY…MAANPQGRVS (85 aa)) is the Ig-like C2-type 3 domain. The interval 1121–1150 (NQRGRSPRSPSGHPHARRPRSRSRDSGDEN) is disordered. Residues 1123–1133 (RGRSPRSPSGH) are compositionally biased toward low complexity. Phosphoserine occurs at positions 1126, 1129, 1131, and 1141. Ser-1143 bears the Phosphoserine; by PKB/AKT1 mark. Position 1146 is a phosphoserine (Ser-1146). Ig-like C2-type domains are found at residues 1160-1251 (PHFL…LVVA) and 1259-1349 (PVFM…ARLD). 2 interaction with EZR regions span residues 1162–1251 (FLQA…LVVA) and 1261–1351 (FMEK…LDVY). Cysteines 1181 and 1233 form a disulfide. Ser-1377 bears the Phosphoserine mark.

The protein belongs to the myotilin/palladin family. As to quaternary structure, interacts with EPS8. Interacts with LASP1. Interacts with VASP. Interacts with ACTN. Interacts with SORBS2. Interacts with PFN1. Interacts with LPP. Interacts with SPIN90. Interacts with SRC. Interacts with EZR. Interacts with RAI14. In terms of processing, phosphorylated predominantly on serines and, to a lesser extent, on tyrosines. Phosphorylation at Ser-1143 by PKB/AKT1 modulates cytoskeletal organization and cell motility. As to expression, detected in both muscle and non-muscle tissues and cells (at protein level). Isoform 3 is widely expressed, isoform 4 is particularly abundant in tissues rich in smooth muscle and in the cardiac muscle and isoform 1 is detected in heart.

It is found in the cytoplasm. The protein localises to the cytoskeleton. It localises to the cell junction. Its subcellular location is the focal adhesion. The protein resides in the myofibril. It is found in the sarcomere. The protein localises to the z line. It localises to the cell projection. Its subcellular location is the ruffle. The protein resides in the podosome. It is found in the lamellipodium. The protein localises to the axon. It localises to the growth cone. Cytoskeletal protein required for organization of normal actin cytoskeleton. Roles in establishing cell morphology, motility, cell adhesion and cell-extracellular matrix interactions in a variety of cell types. May function as a scaffolding molecule with the potential to influence both actin polymerization and the assembly of existing actin filaments into higher-order arrays. Binds to proteins that bind to either monomeric or filamentous actin. Localizes at sites where active actin remodeling takes place, such as lamellipodia and membrane ruffles. Different isoforms may have functional differences. Involved in the control of morphological and cytoskeletal changes associated with dendritic cell maturation. Involved in targeting ACTN to specific subcellular locations. May be required for the initiation of neural tube closure. The chain is Palladin (Palld) from Mus musculus (Mouse).